A 315-amino-acid chain; its full sequence is Transcriptional regulator protein Pur-beta (315 aa).

The tract at residues 1–39 is disordered; it reads MADGDSGSERGGGGPGSFQPAPRGGGGPGGEQETQELAS. Ala2 carries the post-translational modification N-acetylalanine. Phosphoserine occurs at positions 6 and 8. At Arg23 the chain carries Omega-N-methylarginine. The segment at 28–254 is DNA-binding; the sequence is PGGEQETQEL…GVFLRVSEVK (227 aa). Residue Thr34 is modified to Phosphothreonine. Ser104 is subject to Phosphoserine. The residue at position 155 (Arg155) is an Omega-N-methylarginine. Positions 200–220 are disordered; that stretch reads DDELAGGPGGGAGGPGGGLYG. Residues 205-219 show a composition bias toward gly residues; it reads GGPGGGAGGPGGGLY. An N6-acetyllysine modification is found at Lys270. Basic and acidic residues predominate over residues 288-298; sequence RQRDKLYERRG. A disordered region spans residues 288–315; that stretch reads RQRDKLYERRGGGSGGGDESEGEEVDED. Omega-N-methylarginine is present on Arg297. 2 positions are modified to phosphoserine: Ser301 and Ser307. The span at 305–315 shows a compositional bias: acidic residues; it reads DESEGEEVDED.

This sequence belongs to the PUR DNA-binding protein family. Homodimer, heterodimer with PURA and heterotrimer with PURA and YBX1/Y-box protein 1. Interacts with MYOCD and SRF. As to expression, expressed in muscle cells and in the liver.

The protein resides in the nucleus. Its function is as follows. Transcriptional regulator which can act as an activator or a repressor. Represses the transcription of ACTA2 in fibroblasts and smooth muscle cells via its ability to interact with the purine-rich strand of a MCAT- containing element in the 5' flanking region of the gene. Represses the transcription of MYOCD, capable of repressing all isoforms of MYOCD but the magnitude of the repressive effects is most notable for the SMC- specific isoforms. Promotes hepatic glucose production by activating the transcription of ADCY6, leading to cAMP accumulation, increased PKA activity, CREB activation, and increased transcription of PCK1 and G6PC genes. Has capacity to bind repeated elements in single-stranded DNA such as the purine-rich single strand of the PUR element located upstream of the MYC gene. Participates in transcriptional and translational regulation of alpha-MHC expression in cardiac myocytes by binding to the purine-rich negative regulatory (PNR) element. Modulates constitutive liver galectin-3 gene transcription by binding to its promoter. May play a role in the dendritic transport of a subset of mRNAs. The chain is Transcriptional regulator protein Pur-beta (Purb) from Rattus norvegicus (Rat).